The chain runs to 356 residues: Cell division control protein 10 (356 aa).

The Septin-type G domain occupies K36–I286. A G1 motif region spans residues G46 to S53. GTP contacts are provided by residues G46–S53 and T70. Residues T93 to E96 are G3 motif. A G4 motif region spans residues P163–D166. GTP-binding positions include K164–E172 and R235.

This sequence belongs to the TRAFAC class TrmE-Era-EngA-EngB-Septin-like GTPase superfamily. Septin GTPase family. In terms of assembly, component of the septin complex.

Its function is as follows. Septins are GTPases involved in cytokinesis. The septins localize to the site of cleavage and act as a structural scaffold that recruits different components involved in diverse processes at specific stages during the cell cycle. Septins are also involved in cell morphogenesis, chitin deposition, cell cycle regulation, cell compartmentalization and spore wall formation. The protein is Cell division control protein 10 (CDC10) of Encephalitozoon cuniculi (strain GB-M1) (Microsporidian parasite).